Here is a 300-residue protein sequence, read N- to C-terminus: NAD kinase (300 aa).

Catalysis depends on Asp-75, which acts as the Proton acceptor. NAD(+)-binding positions include 75-76, 149-150, Arg-177, Asp-179, 190-195, Ala-214, and Gln-248; these read DG, ND, and TAYALS.

It belongs to the NAD kinase family. It depends on a divalent metal cation as a cofactor.

The protein resides in the cytoplasm. The enzyme catalyses NAD(+) + ATP = ADP + NADP(+) + H(+). In terms of biological role, involved in the regulation of the intracellular balance of NAD and NADP, and is a key enzyme in the biosynthesis of NADP. Catalyzes specifically the phosphorylation on 2'-hydroxyl of the adenosine moiety of NAD to yield NADP. This chain is NAD kinase, found in Burkholderia lata (strain ATCC 17760 / DSM 23089 / LMG 22485 / NCIMB 9086 / R18194 / 383).